The sequence spans 412 residues: MSTMGSWVYITVELAIAVLAILGNVLVCWAVWLNSNLQNVTNYFVVSLAAADIAVGVLAIPFAITISTGFCAACHNCLFFACFVLVLTQSSIFSLLAIAIDRYIAIRIPLRYNGLVTGTRAKGIIAVCWVLSFAIGLTPMLGWNNCSQPKEGRNYSQGCGEGQVACLFEDVVPMNYMVYYNFFAFVLVPLLLMLGVYLRIFLAARRQLKQMESQPLPGERARSTLQKEVHAAKSLAIIVGLFALCWLPLHIINCFTFFCPECSHAPLWLMYLTIVLSHTNSVVNPFIYAYRIREFRQTFRKIIRSHVLRRREPFKAGGTSARALAAHGSDGEQISLRLNGHPPGVWANGSAPHPERRPNGYTLGLVSGGIAPESHGDMGLPDVELLSHELKGACPESPGLEGPLAQDGAGVS.

At 1-7 the chain is on the extracellular side; the sequence is MSTMGSW. A helical membrane pass occupies residues 8–32; that stretch reads VYITVELAIAVLAILGNVLVCWAVW. The Cytoplasmic segment spans residues 33–42; sequence LNSNLQNVTN. Residues 43 to 66 traverse the membrane as a helical segment; the sequence is YFVVSLAAADIAVGVLAIPFAITI. The Extracellular portion of the chain corresponds to 67-77; that stretch reads STGFCAACHNC. Cystine bridges form between Cys-71/Cys-159, Cys-74/Cys-146, and Cys-77/Cys-166. The chain crosses the membrane as a helical span at residues 78-100; the sequence is LFFACFVLVLTQSSIFSLLAIAI. At 101–120 the chain is on the cytoplasmic side; it reads DRYIAIRIPLRYNGLVTGTR. A helical membrane pass occupies residues 121-143; it reads AKGIIAVCWVLSFAIGLTPMLGW. Topologically, residues 144-173 are extracellular; that stretch reads NNCSQPKEGRNYSQGCGEGQVACLFEDVVP. Residues Asn-145 and Asn-154 are each glycosylated (N-linked (GlcNAc...) asparagine). Glu-169 provides a ligand contact to adenosine. The helical transmembrane segment at 174 to 198 threads the bilayer; sequence MNYMVYYNFFAFVLVPLLLMLGVYL. Over 199–234 the chain is Cytoplasmic; the sequence is RIFLAARRQLKQMESQPLPGERARSTLQKEVHAAKS. Residues 235–258 traverse the membrane as a helical segment; sequence LAIIVGLFALCWLPLHIINCFTFF. Asn-253 lines the adenosine pocket. Cys-259 and Cys-262 are joined by a disulfide. Topologically, residues 259-266 are extracellular; it reads CPECSHAP. The chain crosses the membrane as a helical span at residues 267–290; that stretch reads LWLMYLTIVLSHTNSVVNPFIYAY. Residues Ser-277 and His-278 each coordinate adenosine. The Cytoplasmic portion of the chain corresponds to 291–412; the sequence is RIREFRQTFR…PLAQDGAGVS (122 aa). Positions 392–412 are disordered; it reads GACPESPGLEGPLAQDGAGVS.

This sequence belongs to the G-protein coupled receptor 1 family. Interacts (via cytoplasmic C-terminal domain) with USP4; the interaction is direct. May interact with DRD4. Interacts with NECAB2. Interacts (via cytoplasmic C-terminal domain) with GAS2L2; interaction enhances receptor-mediated adenylyl cyclase activity. In terms of processing, ubiquitinated. Deubiquitinated by USP4; leading to stabilization and expression at the cell surface.

Its subcellular location is the cell membrane. Its function is as follows. Receptor for adenosine. The activity of this receptor is mediated by G proteins which activate adenylyl cyclase. The protein is Adenosine receptor A2a (ADORA2A) of Canis lupus familiaris (Dog).